A 355-amino-acid chain; its full sequence is NADH-quinone oxidoreductase subunit H (355 aa).

8 helical membrane-spanning segments follow: residues 25–45, 91–111, 126–146, 170–190, 205–225, 253–273, 290–310, and 330–350; these read VVRILVVSVVILLCVAYLILW, WLYLIAPIMTVVPAFAVWAVI, LLYAMAISSIGVYAVILAGWA, MGFALVLVLMTAGSLNLSEIV, FLSWNWLPLLPAFVVYFISGI, MAFALFFLAEYINMIVISALA, FIPGIFWLVLKVFALLSVFIW, and VFLPVTVIWVVVVGCWMMSPL.

It belongs to the complex I subunit 1 family. As to quaternary structure, NDH-1 is composed of 14 different subunits. Subunits NuoA, H, J, K, L, M, N constitute the membrane sector of the complex.

Its subcellular location is the cell inner membrane. The catalysed reaction is a quinone + NADH + 5 H(+)(in) = a quinol + NAD(+) + 4 H(+)(out). Functionally, NDH-1 shuttles electrons from NADH, via FMN and iron-sulfur (Fe-S) centers, to quinones in the respiratory chain. The immediate electron acceptor for the enzyme in this species is believed to be ubiquinone. Couples the redox reaction to proton translocation (for every two electrons transferred, four hydrogen ions are translocated across the cytoplasmic membrane), and thus conserves the redox energy in a proton gradient. This subunit may bind ubiquinone. The chain is NADH-quinone oxidoreductase subunit H from Burkholderia cenocepacia (strain ATCC BAA-245 / DSM 16553 / LMG 16656 / NCTC 13227 / J2315 / CF5610) (Burkholderia cepacia (strain J2315)).